We begin with the raw amino-acid sequence, 425 residues long: Serine--tRNA ligase 2 (425 aa).

T234–E236 contributes to the L-serine binding site. Position 265–267 (R265–E267) interacts with ATP. L-serine is bound at residue E288. An ATP-binding site is contributed by E352–S355. S388 provides a ligand contact to L-serine.

This sequence belongs to the class-II aminoacyl-tRNA synthetase family. Type-1 seryl-tRNA synthetase subfamily. In terms of assembly, homodimer. The tRNA molecule binds across the dimer.

The protein resides in the cytoplasm. The enzyme catalyses tRNA(Ser) + L-serine + ATP = L-seryl-tRNA(Ser) + AMP + diphosphate + H(+). The catalysed reaction is tRNA(Sec) + L-serine + ATP = L-seryl-tRNA(Sec) + AMP + diphosphate + H(+). It functions in the pathway aminoacyl-tRNA biosynthesis; selenocysteinyl-tRNA(Sec) biosynthesis; L-seryl-tRNA(Sec) from L-serine and tRNA(Sec): step 1/1. Catalyzes the attachment of serine to tRNA(Ser). Is also able to aminoacylate tRNA(Sec) with serine, to form the misacylated tRNA L-seryl-tRNA(Sec), which will be further converted into selenocysteinyl-tRNA(Sec). This chain is Serine--tRNA ligase 2, found in Clostridium acetobutylicum (strain ATCC 824 / DSM 792 / JCM 1419 / IAM 19013 / LMG 5710 / NBRC 13948 / NRRL B-527 / VKM B-1787 / 2291 / W).